Reading from the N-terminus, the 423-residue chain is UDP-N-acetylglucosamine 1-carboxyvinyltransferase 2 (423 aa).

Residue Lys-23–Asn-24 coordinates phosphoenolpyruvate. Arg-96 contacts UDP-N-acetyl-alpha-D-glucosamine. The active-site Proton donor is the Cys-120. Cys-120 carries the 2-(S-cysteinyl)pyruvic acid O-phosphothioketal modification. UDP-N-acetyl-alpha-D-glucosamine contacts are provided by residues Arg-125 to Leu-129, Asp-309, and Val-331.

The protein belongs to the EPSP synthase family. MurA subfamily.

It is found in the cytoplasm. It carries out the reaction phosphoenolpyruvate + UDP-N-acetyl-alpha-D-glucosamine = UDP-N-acetyl-3-O-(1-carboxyvinyl)-alpha-D-glucosamine + phosphate. It functions in the pathway cell wall biogenesis; peptidoglycan biosynthesis. Cell wall formation. Adds enolpyruvyl to UDP-N-acetylglucosamine. This is UDP-N-acetylglucosamine 1-carboxyvinyltransferase 2 from Streptococcus agalactiae serotype III (strain NEM316).